Consider the following 392-residue polypeptide: Putative F-box protein At1g71320 (392 aa).

The region spanning 8–55 (NPKTIFIPDDIAEGIFHHLPIKSLARFKVLSKKWTSMIESTYFSHKRL) is the F-box domain.

This Arabidopsis thaliana (Mouse-ear cress) protein is Putative F-box protein At1g71320.